Here is a 229-residue protein sequence, read N- to C-terminus: UPF0173 metal-dependent hydrolase SAR1785 (229 aa).

This sequence belongs to the UPF0173 family.

The chain is UPF0173 metal-dependent hydrolase SAR1785 from Staphylococcus aureus (strain MRSA252).